The primary structure comprises 182 residues: UPF0397 protein BCAH187_A2708 (182 aa).

The next 5 helical transmembrane spans lie at 9–29 (VVAI…GFSI), 40–60 (AILT…IGLI), 71–91 (WGIW…MGFI), 114–134 (ITGL…DIIV), and 142–162 (IVIQ…VLGL).

Belongs to the UPF0397 family.

It localises to the cell membrane. This Bacillus cereus (strain AH187) protein is UPF0397 protein BCAH187_A2708.